The primary structure comprises 194 residues: dTTP/UTP pyrophosphatase (194 aa).

Catalysis depends on Asp-73, which acts as the Proton acceptor.

The protein belongs to the Maf family. YhdE subfamily. Requires a divalent metal cation as cofactor.

Its subcellular location is the cytoplasm. The enzyme catalyses dTTP + H2O = dTMP + diphosphate + H(+). It catalyses the reaction UTP + H2O = UMP + diphosphate + H(+). In terms of biological role, nucleoside triphosphate pyrophosphatase that hydrolyzes dTTP and UTP. May have a dual role in cell division arrest and in preventing the incorporation of modified nucleotides into cellular nucleic acids. The chain is dTTP/UTP pyrophosphatase from Clostridium botulinum (strain Okra / Type B1).